The sequence spans 386 residues: MSALEKSMHLGRLPSRPPLPGSGGSQSGAKMRMGPGRKRDFTPVPWSQYFESMEDVEVENETGKDTFRVYKSGSEGPVLLLLHGGGHSALSWAVFTAAIISRVQCRIVALDLRGHGETKVKNSEDLSAETMAKDVGNVVEAMYGDLPPPVMLIGHSMGGAIAVHTAAANLVPSLLGLCMIDVVEGTAMDALNSMQNFLRGRPKTFKSLENAIEWSVKSGQIRNLESARVSMVGQVKQCEGITSPEGSKSIVEGIIEEEEEDEEGSESVNKRKKEDDMETKKDHPYTWRIELAKTEKYWDGWFRGLSNLFLSCPIPKLLLLAGVDRLDKDLTIGQMQGKFQMQVLPQCGHAVHEDAPDKVAEAVATFLIRHRFAEPIGGFQCVFPGC.

Residues 1–38 are disordered; sequence MSALEKSMHLGRLPSRPPLPGSGGSQSGAKMRMGPGRK. Ser15 is modified (phosphoserine). Arg16 bears the Asymmetric dimethylarginine; alternate mark. Arg16 bears the Omega-N-methylarginine; alternate mark. Catalysis depends on residues Ser156 and Asp181. Acidic residues predominate over residues 255-265; that stretch reads IEEEEEDEEGS. The segment at 255–280 is disordered; that stretch reads IEEEEEDEEGSESVNKRKKEDDMETK. Residues 268–280 show a composition bias toward basic and acidic residues; sequence VNKRKKEDDMETK. Residue His349 is part of the active site.

It belongs to the AB hydrolase superfamily. As to quaternary structure, binds PPP2CA and PPP2CB. Phosphorylated by SIK1 following increases in intracellular sodium, leading to dissociation from the protein phosphatase 2A (PP2A) complex and subsequent dephosphorylation of sodium/potassium-transporting ATPase ATP1A1. As to expression, ubiquitous. Highly expressed in testis and brain.

It carries out the reaction [phosphatase 2A protein]-C-terminal L-leucine methyl ester + H2O = [phosphatase 2A protein]-C-terminal L-leucine + methanol + H(+). Demethylates proteins that have been reversibly carboxymethylated. Demethylates PPP2CB (in vitro) and PPP2CA. Binding to PPP2CA displaces the manganese ion and inactivates the enzyme. This Mus musculus (Mouse) protein is Protein phosphatase methylesterase 1 (Ppme1).